A 740-amino-acid chain; its full sequence is Catalase-peroxidase (740 aa).

The disordered stretch occupies residues 1 to 32 (MPEDRPIEDSPPIGEAQTDAPAGGCPAGFGRI). A cross-link (tryptophyl-tyrosyl-methioninium (Trp-Tyr) (with M-263)) is located at residues 113 to 237 (WHAAGTYRVS…LAAVQMGLIY (125 aa)). The Proton acceptor role is filled by histidine 114. Positions 237–263 (YVNPEGPNGNPDPQASAIDIRETFGRM) form a cross-link, tryptophyl-tyrosyl-methioninium (Tyr-Met) (with W-113). Heme b is bound at residue histidine 278.

It belongs to the peroxidase family. Peroxidase/catalase subfamily. Homodimer or homotetramer. Heme b serves as cofactor. In terms of processing, formation of the three residue Trp-Tyr-Met cross-link is important for the catalase, but not the peroxidase activity of the enzyme.

It carries out the reaction H2O2 + AH2 = A + 2 H2O. The enzyme catalyses 2 H2O2 = O2 + 2 H2O. Bifunctional enzyme with both catalase and broad-spectrum peroxidase activity. May play a role in the intracellular survival of mycobacteria. The polypeptide is Catalase-peroxidase (Mycolicibacterium smegmatis (Mycobacterium smegmatis)).